Consider the following 236-residue polypeptide: uncharacterized protein (236 aa).

In terms of domain architecture, HTH gntR-type spans 1–69 (MLKYQQIATE…RGSGIFVRKH (69 aa)). Residues 29–48 (LETLMAQFEVSKSTITKSLE) constitute a DNA-binding region (H-T-H motif).

This is an uncharacterized protein from Bacillus subtilis (strain 168).